Consider the following 467-residue polypeptide: Sialic acid-binding Ig-like lectin 12 (467 aa).

The signal sequence occupies residues M1–G18. Residues Q19–T353 are Extracellular-facing. The region spanning P21–M141 is the Ig-like V-type domain. Disulfide bonds link C40–C176, C45–C108, and C170–C219. N-linked (GlcNAc...) asparagine glycosylation occurs at N46. R126 is an N-acetylneuraminate binding site. 2 consecutive Ig-like C2-type domains span residues P152 to S239 and P242 to S339. N-linked (GlcNAc...) asparagine glycosylation is found at N167, N197, N216, N227, N237, N244, N262, N287, and N294. A disulfide bond links C278 and C323. A helical transmembrane segment spans residues F354–V374. Residues R375 to P467 are Cytoplasmic-facing. The short motif at I430 to L435 is the ITIM motif element. Y432 and Y455 each carry phosphotyrosine. The SLAM-like motif motif lies at T453–I458.

It belongs to the immunoglobulin superfamily. SIGLEC (sialic acid binding Ig-like lectin) family. Homodimer; disulfide-linked. Interacts with PTPN6/SHP-1 and PTPN11/SHP-2 upon phosphorylation. Phosphorylation of Tyr-432 is required for binding to PTPN6 and PTPN11. Phosphorylation of Tyr-455 is involved in binding to PTPN6. Tyr-432 needs to be phosphorylated prior to Tyr-455. Expressed by monocytic/myeloid lineage cells. Found at higher levels in spleen, liver and heart. Found at lower levels in kidney and lung.

It is found in the membrane. In terms of biological role, putative adhesion molecule that mediates sialic-acid dependent binding to cells. The sialic acid recognition site may be masked by cis interactions with sialic acids on the same cell surface. In the immune response, may act as an inhibitory receptor upon ligand induced tyrosine phosphorylation by recruiting cytoplasmic phosphatase(s) via their SH2 domain(s) that block signal transduction through dephosphorylation of signaling molecules. The polypeptide is Sialic acid-binding Ig-like lectin 12 (Siglec12) (Mus musculus (Mouse)).